A 312-amino-acid chain; its full sequence is MATHKAEAQETDFRTTGPPTDLEQCPFPPSSRKFPFESVAADSTEGWAVAAEHHLKRSGEDGGWEQPASGVEPSRPTTMASSKTVCDAQPHSMPSCGLSADTQTRATSKLPVKSKDAEMLRHLHTGGLEPDVTKVTKPRRENGQGKAAETASRRNIRSSYKPLSKQKPEEDLKDKNELLEAVNKQLHQKLTETQGELKDLTQKVELLEKFQDNCLAILESKGLNSGQETQESKQEPSTDPTDSMLLLETLKDELKLFNETAKKQMEELQALKVKLKLKEKERIQFLEQQTLGKDEASDFTIILEEMEQLLEM.

Residues 1–13 (MATHKAEAQETDF) show a composition bias toward basic and acidic residues. 3 disordered regions span residues 1-32 (MATH…PSSR), 55-176 (LKRS…KDKN), and 221-242 (KGLN…DPTD). A compositionally biased stretch (polar residues) spans 75–84 (RPTTMASSKT). Basic and acidic residues-rich tracts occupy residues 131 to 143 (DVTK…RENG) and 166 to 176 (QKPEEDLKDKN). Positions 156–312 (IRSSYKPLSK…LEEMEQLLEM (157 aa)) are interaction with SPAG5. The stretch at 169-210 (EEDLKDKNELLEAVNKQLHQKLTETQGELKDLTQKVELLEKF) forms a coiled coil. A coiled-coil region spans residues 246-288 (LLETLKDELKLFNETAKKQMEELQALKVKLKLKEKERIQFLEQ).

As to quaternary structure, part of an astrin (SPAG5)-kinastrin (SKAP) complex containing KNSTRN, SPAG5, PLK1, DYNLL1 and SGO2. Interacts with SPAG5. Directly binds to microtubules, although at relatively low affinity. Interacts with CENPE; this interaction greatly favors microtubule-binding. Interacts with DSN1/MIS13; leading to localization to kinetochores. Interacts with MAPRE1/EB1; leading to localization to the microtubule plus ends. Interacts with PRPF19. Interacts with DYNLL1. Interacts with MAP4.

Its subcellular location is the nucleus. The protein localises to the chromosome. It is found in the centromere. It localises to the kinetochore. The protein resides in the cytoplasm. Its subcellular location is the cytoskeleton. The protein localises to the spindle pole. It is found in the microtubule organizing center. Essential component of the mitotic spindle required for faithful chromosome segregation and progression into anaphase. Promotes the metaphase-to-anaphase transition and is required for chromosome alignment, normal timing of sister chromatid segregation, and maintenance of spindle pole architecture. The astrin (SPAG5)-kinastrin (SKAP) complex promotes stable microtubule-kinetochore attachments. Required for kinetochore oscillations and dynamics of microtubule plus-ends during live cell mitosis, possibly by forming a link between spindle microtubule plus-ends and mitotic chromosomes to achieve faithful cell division. This chain is Small kinetochore-associated protein (Knstrn), found in Rattus norvegicus (Rat).